The primary structure comprises 610 residues: Elongation factor 4 (610 aa).

Residues 15–197 (KSIRNFSIIA…RIINDIPYPK (183 aa)) enclose the tr-type G domain. GTP contacts are provided by residues 27–32 (DHGKST) and 144–147 (NKID).

Belongs to the TRAFAC class translation factor GTPase superfamily. Classic translation factor GTPase family. LepA subfamily.

Its subcellular location is the cell membrane. The catalysed reaction is GTP + H2O = GDP + phosphate + H(+). Its function is as follows. Required for accurate and efficient protein synthesis under certain stress conditions. May act as a fidelity factor of the translation reaction, by catalyzing a one-codon backward translocation of tRNAs on improperly translocated ribosomes. Back-translocation proceeds from a post-translocation (POST) complex to a pre-translocation (PRE) complex, thus giving elongation factor G a second chance to translocate the tRNAs correctly. Binds to ribosomes in a GTP-dependent manner. The polypeptide is Elongation factor 4 (Buchnera aphidicola subsp. Acyrthosiphon pisum (strain APS) (Acyrthosiphon pisum symbiotic bacterium)).